The chain runs to 69 residues: MKNLLICIIKMYRKYISSLKRPSCRFYPTCSQYSIEAIEKYGALKGTLISIKRILKCHPFNEGGYDPVK.

It belongs to the UPF0161 family.

Its subcellular location is the cell membrane. In terms of biological role, could be involved in insertion of integral membrane proteins into the membrane. The polypeptide is Putative membrane protein insertion efficiency factor (Clostridium botulinum (strain 657 / Type Ba4)).